Reading from the N-terminus, the 390-residue chain is Succinate--CoA ligase [ADP-forming] subunit beta (390 aa).

The 240-residue stretch at 9–248 (KDILRKFGVT…TSEEDPFEVE (240 aa)) folds into the ATP-grasp domain. ATP is bound by residues Lys-50, 57-59 (GRG), Glu-103, Met-106, and Glu-111. Mg(2+) contacts are provided by Asn-203 and Asp-217. Substrate is bound by residues Asn-268 and 325–327 (GIV).

It belongs to the succinate/malate CoA ligase beta subunit family. Heterotetramer of two alpha and two beta subunits. The cofactor is Mg(2+).

The enzyme catalyses succinate + ATP + CoA = succinyl-CoA + ADP + phosphate. It carries out the reaction GTP + succinate + CoA = succinyl-CoA + GDP + phosphate. Its pathway is carbohydrate metabolism; tricarboxylic acid cycle; succinate from succinyl-CoA (ligase route): step 1/1. Succinyl-CoA synthetase functions in the citric acid cycle (TCA), coupling the hydrolysis of succinyl-CoA to the synthesis of either ATP or GTP and thus represents the only step of substrate-level phosphorylation in the TCA. The beta subunit provides nucleotide specificity of the enzyme and binds the substrate succinate, while the binding sites for coenzyme A and phosphate are found in the alpha subunit. This Chlorobium chlorochromatii (strain CaD3) protein is Succinate--CoA ligase [ADP-forming] subunit beta.